A 336-amino-acid polypeptide reads, in one-letter code: Dihydroorotate dehydrogenase (quinone) (336 aa).

FMN contacts are provided by residues alanine 62–lysine 66 and threonine 86. Residue lysine 66 coordinates substrate. Asparagine 111–phenylalanine 115 is a substrate binding site. Residues asparagine 139 and asparagine 172 each coordinate FMN. Asparagine 172 serves as a coordination point for substrate. Serine 175 (nucleophile) is an active-site residue. Residue asparagine 177 participates in substrate binding. Positions 217 and 245 each coordinate FMN. Residue asparagine 246–threonine 247 coordinates substrate. Residues glycine 268, glycine 297, and tyrosine 318–serine 319 each bind FMN.

The protein belongs to the dihydroorotate dehydrogenase family. Type 2 subfamily. Monomer. It depends on FMN as a cofactor.

The protein localises to the cell membrane. The enzyme catalyses (S)-dihydroorotate + a quinone = orotate + a quinol. It functions in the pathway pyrimidine metabolism; UMP biosynthesis via de novo pathway; orotate from (S)-dihydroorotate (quinone route): step 1/1. Catalyzes the conversion of dihydroorotate to orotate with quinone as electron acceptor. This Baumannia cicadellinicola subsp. Homalodisca coagulata protein is Dihydroorotate dehydrogenase (quinone).